The following is a 1073-amino-acid chain: MPLESGKLINDLRVSELKTELEKRGLSTQGVKVVLTVRLNKALRDEGLDPADHVFEHAVSPMKKSTRRSNEMARAAAAAAAEKVEKGAGDEGNDENVLVEEKEEEEEEEDSHDLQIIEDHELEVPSDEKDDTLVEDEEFEEAEQVEPEPEAVEPVVEEKPEEKLEEKPEEKLEEKPEEKPVEPEVVTVEEPVAEVIEVEKAVAEPVELKEKPEKEPEVVLVEEPVEQLENEPEVVPMEVEEAKKSDEQDGEDEFEEDDSSSDIEIIEPTLQESEPLAEEKVEKKEKKPEEIPHNLEQNEPISMETEEKVEEEVIILNSSINNVSQDDEIVLDYEEDLLEDPLDEPIEQKEPKAAEPTPKQLQKVEASTPQATPSKAASSSAGSGKSMLFGDDVKKTSIWIRGMTPATKASSVKQLASQYGKVIQSKIFNSKAADANGDVKNCFALIQFADVTAMELAMTSLHQKNYQGRVLRVEKVSESHLTSSAEKLAREKHVAEAASTMSTSPAPTPTPEPVVTTTTTTSAAPKRKEPIHAPESSSSEGQRAKRRAIEAPVRSRSRSRGGGGEPRSSRKPITFDREEESNRDSRRTIAAAPPARTSRMARSPLRAPLRAARGSESSRSSTRGGGGGGESLTISSRVDTSGCRGGAIKRSVERSVPNNISTSELRRKHHQIHVTVQQDAPRASYQTEQYARERSSSTTTSSRRRQVSPDRSEQRRHRDEPPPRRAPQEQPSRRRGASPPEPPRRQEGARRSEEPERRRLFDEREQLAHIMAAKDMYAEQQKIRAEKALIAFQMQQLEKKKLEAELQIAQKALLMQQAALGGGGALVVDGGALVAGGGAVGYHHQEHRSSYGGGGSSSNGGSSNRRRQTRRSPSPPQQHHSSSRRQRRDSGGAGRYRQSTSSSNSNRNSNSGGRNLVVTATTTNNTNATNAGRSYGIQSVPDASSYSTNNYQQRSSAASAYDLQITATMPQAGAANSGAAYHQPYGNVYQHNTAAYPVWGGLDAQGHMAMDTNWSQNAATPSTSTSSGGGGGQQWQQQSYGSNQHQHHQNNNSSQPSSSNRRGNDYGNYRGNY.

The region spanning 9 to 43 (INDLRVSELKTELEKRGLSTQGVKVVLTVRLNKAL) is the SAP domain. Disordered regions lie at residues 59 to 186 (VSPM…PEVV), 207 to 305 (ELKE…SMET), and 337 to 388 (LLED…KSML). Over residues 91 to 111 (EGNDENVLVEEKEEEEEEEDS) the composition is skewed to acidic residues. A compositionally biased stretch (basic and acidic residues) spans 112–127 (HDLQIIEDHELEVPSD). The segment covering 128–151 (EKDDTLVEDEEFEEAEQVEPEPEA) has biased composition (acidic residues). Composition is skewed to basic and acidic residues over residues 156–182 (VEEKPEEKLEEKPEEKLEEKPEEKPVE) and 207–217 (ELKEKPEKEPE). Acidic residues-rich tracts occupy residues 223 to 232 (EPVEQLENEP) and 248 to 265 (QDGEDEFEEDDSSSDIEI). Residues 277 to 293 (AEEKVEKKEKKPEEIPH) are compositionally biased toward basic and acidic residues. Residues 366 to 386 (ASTPQATPSKAASSSAGSGKS) are compositionally biased toward low complexity. An RRM domain is found at 396–478 (TSIWIRGMTP…RVLRVEKVSE (83 aa)). Disordered regions lie at residues 481-759 (LTSS…ERRR), 845-917 (QEHR…RNLV), and 1015-1073 (SQNA…RGNY). 2 stretches are compositionally biased toward low complexity: residues 496 to 505 (EAASTMSTSP) and 513 to 524 (PVVTTTTTTSAA). Residues 573-587 (ITFDREEESNRDSRR) show a composition bias toward basic and acidic residues. A compositionally biased stretch (low complexity) spans 588–622 (TIAAAPPARTSRMARSPLRAPLRAARGSESSRSST). The span at 674–689 (VTVQQDAPRASYQTEQ) shows a compositional bias: polar residues. Basic and acidic residues-rich tracts occupy residues 707 to 727 (VSPDRSEQRRHRDEPPPRRAP) and 742 to 759 (PPRRQEGARRSEEPERRR). Composition is skewed to low complexity over residues 901-917 (SSSNSNRNSNSGGRNLV), 1015-1026 (SQNAATPSTSTS), and 1034-1060 (QWQQQSYGSNQHQHHQNNNSSQPSSSN).

Expressed in most tissues including the hypodermal, muscle, neuronal, vulval and intestinal tissues. Isoform a: Expressed in the pharynx, nerve ring, intestine, neurons and ventral nerve cord.

Its subcellular location is the nucleus. Functionally, involved in pharyngeal muscle development and ensures pharyngeal grinder function during feeding. Plays a role in the defense against the accumulation of ingested live pathogenic bacteria in the intestine. Has a role in the determination of life span. In Caenorhabditis elegans, this protein is Pharyngeal muscle protein 2.